Consider the following 310-residue polypeptide: ER-derived vesicles protein ERV29 (310 aa).

Topologically, residues 1–108 are cytoplasmic; it reads MSYRGPIGNF…YLNKWKHYPY (108 aa). A disordered region spans residues 11–31; sequence GGMPMSSSQGPYSGGAQFRSN. Residues 109-129 traverse the membrane as a helical segment; that stretch reads FFVVVFLVVVTVSMLIGASLL. Residues 130 to 137 lie on the Lumenal side of the membrane; that stretch reads VLRKQTNY. A helical membrane pass occupies residues 138 to 158; it reads ATGVLCACVISQALVYGLFTG. At 159–209 the chain is on the cytoplasmic side; the sequence is SSFVLRNFSVIGGLLIAFSDSIVQNKTTFGMLPELNSKNDKAKGYLLFAGR. A helical membrane pass occupies residues 210–230; the sequence is ILIVLMFIAFTFSKSWFTVVL. The Lumenal portion of the chain corresponds to 231-245; the sequence is TIIGTICFAIGYKTK. Residues 246 to 266 form a helical membrane-spanning segment; the sequence is FASIMLGLILTFYNITLNNYW. Topologically, residues 267–310 are cytoplasmic; sequence FYNNTKRDFLKYEFYQNLSIIGGLLLVTNTGAGELSVDEKKKIY. The Di-lysine motif signature appears at 307–310; the sequence is KKIY.

It belongs to the SURF4 family.

The protein resides in the endoplasmic reticulum membrane. Its function is as follows. Constituent of COPII-coated endoplasmic reticulum-derived transport vesicles. Required for efficient transport of a subset of secretory proteins to the Golgi. The C-terminal di-lysine motif is required for exit from the endoplasmic reticulum. Required directly for packaging glycosylated pro-alpha-factor into COPII vesicles. Facilitates retrograde transport from the Golgi to the endoplasmic reticulum. In Saccharomyces cerevisiae (strain ATCC 204508 / S288c) (Baker's yeast), this protein is ER-derived vesicles protein ERV29 (ERV29).